Reading from the N-terminus, the 695-residue chain is Calcium-binding acidic-repeat protein (695 aa).

Positions 1 to 20 (MSHLWCWLFLVLCLACLVLS) form a signal peptide, or 23. TSP type-3 repeat units follow at residues 24–38 (KDSD…DEIN), 47–56 (ADSDQDGLTD), 70–82 (KDTD…DGVE), 184–196 (GDSD…DGAE), 202–214 (KDSD…DEEE), and 248–260 (GDSD…DGAE). Positions 45–695 (YNADSDQDGL…TDPWRSDHSV (651 aa)) are disordered. The span at 59 to 70 (EVNRHQTHPQDK) shows a compositional bias: basic and acidic residues. 3 stretches are compositionally biased toward acidic residues: residues 271 to 283 (ADSD…DGEE), 291 to 306 (PEDP…DGDE), and 313 to 324 (DPEEDDSDEDGV). 15 TSP type-3 repeats span residues 294–308 (PDSD…DEVN), 317–329 (DDSD…DGAE), 340–352 (EDSD…DGAE), 363–375 (EDSD…DGAE), 379–393 (TDSD…DEVA), 402–414 (ADSD…DGAE), 425–437 (KDTD…DGVE), 470–482 (EDTD…DGAE), 493–505 (ADTD…DGAE), 516–528 (ADSD…DGAE), 539–551 (GDSD…DAAE), 555–569 (KDSD…DEVR), 600–609 (RDTDGDGVAD), 623–635 (ADTD…DGAE), and 646–658 (ADSD…DGAE). Composition is skewed to acidic residues over residues 361 to 370 (NDEDSDDDGI) and 381 to 392 (SDGDGLPDEDEV). 2 stretches are compositionally biased toward acidic residues: residues 467-477 (PNDEDTDDDGL) and 491-500 (EDADTDDDGL). Positions 537-546 (NDGDSDDDGV) are enriched in acidic residues. Positions 589–603 (EILKHKTDPRNRDTD) are enriched in basic and acidic residues. Positions 665–679 (NAKDGDSDDDGKADG) are enriched in basic and acidic residues.

Its subcellular location is the secreted. The protein localises to the endoplasmic reticulum. In terms of biological role, may function as a calcium-binding protein. This chain is Calcium-binding acidic-repeat protein, found in Euglena gracilis.